We begin with the raw amino-acid sequence, 238 residues long: Ribonuclease PH (238 aa).

Residues Arg-86 and 124–126 (GTR) each bind phosphate.

Belongs to the RNase PH family. Homohexameric ring arranged as a trimer of dimers.

The catalysed reaction is tRNA(n+1) + phosphate = tRNA(n) + a ribonucleoside 5'-diphosphate. Functionally, phosphorolytic 3'-5' exoribonuclease that plays an important role in tRNA 3'-end maturation. Removes nucleotide residues following the 3'-CCA terminus of tRNAs; can also add nucleotides to the ends of RNA molecules by using nucleoside diphosphates as substrates, but this may not be physiologically important. Probably plays a role in initiation of 16S rRNA degradation (leading to ribosome degradation) during starvation. The sequence is that of Ribonuclease PH from Chelativorans sp. (strain BNC1).